We begin with the raw amino-acid sequence, 307 residues long: MVPVLLSLPLLLGPAVFQETGSYYLTFLYTGLSRPSKGFPRFQATAFLNDQAFFHYNSNSGKAEPVGPWSQVEGMEDWEKESQLQRAREEIFLVTLKDIMDYYKDTTGSHTFQGMFGCEITNNRSSGAVWRYAYDGEDFIEFNKEIPAWIPLDPAAANTKLKWEAEKVYVQRAKAYLEEECPEMLKRYLNYSRSHLDRIDPPTVTITSRVIPGGNRIFKCLAYGFYPQRISLHWNKANKKLAFEPERGVFPNGNGTYLSWAEVEVSPQDIDPFFCLIDHRGFSQSLSVQWDRTRKVKDENNVVAQPQ.

Residues 1–17 form the signal peptide; it reads MVPVLLSLPLLLGPAVF. Gln-18 carries the pyrrolidone carboxylic acid modification. A disulfide bridge links Cys-118 with Cys-181. Residues Asn-123, Asn-190, and Asn-254 are each glycosylated (N-linked (GlcNAc...) asparagine). Positions 202–287 constitute an Ig-like C1-type domain; it reads PTVTITSRVI…DHRGFSQSLS (86 aa). Cys-220 and Cys-275 are oxidised to a cystine.

The protein belongs to the MHC class I family. In terms of assembly, interacts with PIP.

The protein resides in the secreted. Functionally, stimulates lipid degradation in adipocytes and causes the extensive fat losses associated with some advanced cancers. This chain is Zinc-alpha-2-glycoprotein (Azgp1), found in Mus musculus (Mouse).